We begin with the raw amino-acid sequence, 150 residues long: Ribonuclease H (150 aa).

The RNase H type-1 domain maps to 3–144 (GEDIVEIYTD…ADALARQGMA (142 aa)). Asp-12, Glu-50, Asp-72, and Asp-136 together coordinate Mg(2+).

The protein belongs to the RNase H family. As to quaternary structure, monomer. The cofactor is Mg(2+).

The protein localises to the cytoplasm. The catalysed reaction is Endonucleolytic cleavage to 5'-phosphomonoester.. Endonuclease that specifically degrades the RNA of RNA-DNA hybrids. The protein is Ribonuclease H of Parvibaculum lavamentivorans (strain DS-1 / DSM 13023 / NCIMB 13966).